We begin with the raw amino-acid sequence, 461 residues long: Isthmin-1 (461 aa).

An N-terminal signal peptide occupies residues 1-26 (MVRLAAELLLLLGLLLLTLHITVLRS). Asparagine 33 carries an N-linked (GlcNAc...) asparagine glycan. Residues 40-58 (QDSRVAENNVNADSSSSVQ) are compositionally biased toward polar residues. Disordered stretches follow at residues 40–62 (QDSRVAENNVNADSSSSVQLGPG), 73–92 (ASQPWAQSPGTGGSLQRDGP), and 128–188 (EGSE…NFLK). A compositionally biased stretch (basic and acidic residues) spans 131-141 (EPEKGMRKENK). Over residues 156–165 (SSSSSSSSVS) the composition is skewed to low complexity. The TSP type-1 domain maps to 215–259 (DGEGDWSAWSPCSVSCGNGNQKRTRSCGYACTATESRTCDMPSCP). 3 disulfide bridges follow: cysteine 226-cysteine 253, cysteine 230-cysteine 258, and cysteine 241-cysteine 245. A glycan (N-linked (GlcNAc...) asparagine) is linked at asparagine 282. Residues 286-449 (LFGVDTDSCE…QKCAENPQDE (164 aa)) enclose the AMOP domain.

Belongs to the isthmin family.

It localises to the secreted. Functionally, may specifically influence certain angiogenesis process. The sequence is that of Isthmin-1 (ism1) from Danio rerio (Zebrafish).